We begin with the raw amino-acid sequence, 218 residues long: Nucleoid occlusion factor SlmA (218 aa).

The region spanning 30–90 is the HTH tetR-type domain; it reads ERRQQVLTVL…ALIEHIESTL (61 aa). The segment at residues 53 to 72 is a DNA-binding region (H-T-H motif); the sequence is TTARLAKEVGVSEAALYRYF.

This sequence belongs to the nucleoid occlusion factor SlmA family. As to quaternary structure, homodimer. Interacts with FtsZ.

It localises to the cytoplasm. It is found in the nucleoid. Functionally, required for nucleoid occlusion (NO) phenomenon, which prevents Z-ring formation and cell division over the nucleoid. Acts as a DNA-associated cell division inhibitor that binds simultaneously chromosomal DNA and FtsZ, and disrupts the assembly of FtsZ polymers. SlmA-DNA-binding sequences (SBS) are dispersed on non-Ter regions of the chromosome, preventing FtsZ polymerization at these regions. In Haemophilus influenzae (strain PittGG), this protein is Nucleoid occlusion factor SlmA.